A 1259-amino-acid chain; its full sequence is Protein retinal degeneration B (1259 aa).

The tract at residues 268 to 378 (GGGEECSDDS…SKGALHSPVG (111 aa)) is disordered. Serine 274 and serine 277 each carry phosphoserine. A compositionally biased stretch (low complexity) spans 284-293 (STAATAASTT). The segment covering 318–335 (SSDEEGEEEEDDDEDEND) has biased composition (acidic residues). The span at 347 to 363 (QGGSAQRSRSQSIQMAQ) shows a compositional bias: low complexity. Phosphoserine is present on residues serine 401, serine 403, and serine 434. 3 disordered regions span residues 427 to 454 (LLGE…GNSR), 472 to 500 (RGNK…STPS), and 660 to 692 (SQPG…NSRL). The span at 663–678 (GTASGASNSGGDAATN) shows a compositional bias: low complexity. The segment covering 679–689 (INTHNPLSPRN) has biased composition (polar residues). One can recognise a DDHD domain in the interval 730-913 (LDFEVCDFFM…IAFILRQIGK (184 aa)).

The protein belongs to the PtdIns transfer protein family. PI transfer class IIA subfamily. In terms of tissue distribution, expressed in adult heads, not detected in bodies.

It carries out the reaction a 1,2-diacyl-sn-glycero-3-phospho-(1D-myo-inositol)(in) = a 1,2-diacyl-sn-glycero-3-phospho-(1D-myo-inositol)(out). It catalyses the reaction a 1,2-diacyl-sn-glycero-3-phosphate(in) = a 1,2-diacyl-sn-glycero-3-phosphate(out). Its function is as follows. Catalyzes the transfer of phosphatidylinositol (PI) and phosphatidic acid (PA) between membranes. May control phosphatidylinositol concentration in transport vesicles from the subrhabdomeric cisternae (SRC) to the rhabdomere. May function as a calcium transporter. The sequence is that of Protein retinal degeneration B (rdgB) from Drosophila melanogaster (Fruit fly).